The sequence spans 83 residues: Small ribosomal subunit protein bS16 (83 aa).

It belongs to the bacterial ribosomal protein bS16 family.

The protein is Small ribosomal subunit protein bS16 of Pseudomonas putida (strain ATCC 700007 / DSM 6899 / JCM 31910 / BCRC 17059 / LMG 24140 / F1).